Reading from the N-terminus, the 623-residue chain is Putative pentatricopeptide repeat-containing protein At3g11460, mitochondrial (623 aa).

The transit peptide at Met1–Ser35 directs the protein to the mitochondrion. PPR repeat units lie at residues Ala17–Pro51, Asp52–Thr86, Glu87–Ser117, Leu120–Val154, Asp155–Ser189, Glu190–Lys220, Gly221–Pro255, Asp256–Pro290, Asn291–Lys321, Ser322–Pro356, Asp357–Glu387, and Gly393–Glu423. Positions Val428–Lys503 are type E motif. Positions Gly504–Glu535 are type E(+) motif. The type DYW motif stretch occupies residues Leu536–Trp623.

This sequence belongs to the PPR family. PCMP-H subfamily. Interacts with MORF8/RIP1.

It is found in the mitochondrion. In terms of biological role, involved in C-to-U editing of mitochondrial RNA. Required specifically for editing the mitochondrial NAD2 transcript. This chain is Putative pentatricopeptide repeat-containing protein At3g11460, mitochondrial (PCMP-H52), found in Arabidopsis thaliana (Mouse-ear cress).